The chain runs to 156 residues: uncharacterized protein (156 aa).

The 147-residue stretch at 10–156 folds into the N-acetyltransferase domain; the sequence is VAARTFPLAC…NDYVMVRELV (147 aa).

It belongs to the acetyltransferase family.

This is an uncharacterized protein from Mycobacterium bovis (strain ATCC BAA-935 / AF2122/97).